A 418-amino-acid polypeptide reads, in one-letter code: Odorant receptor 13a (418 aa).

Residues 1–38 are Cytoplasmic-facing; sequence MFYSYPYKALSFPIQCVWLKLNGSWPLTESSRPWRSQS. A helical transmembrane segment spans residues 39–59; sequence LLATAYIVWAWYVIASVGITI. The Extracellular portion of the chain corresponds to 60–70; sequence SYQTAFLLNNL. An N-linked (GlcNAc...) asparagine glycan is attached at Asn-69. A helical membrane pass occupies residues 71–91; that stretch reads SDIIITTENCCTTFMGVLNFV. The Cytoplasmic portion of the chain corresponds to 92 to 140; the sequence is RLIHLRLNQRKFRQLIENFSYEIWIPNSSKNNVAAECRRRMVTFSIMTS. A helical transmembrane segment spans residues 141–161; the sequence is LLACLIIMYCVLPLVEIFFGP. Residues 162–195 lie on the Extracellular side of the membrane; it reads AFDAQNKPFPYKMIFPYDAQSSWIRYVMTYIFTS. The chain crosses the membrane as a helical span at residues 196–216; that stretch reads YAGICVVTTLFAEDTILGFFI. Topologically, residues 217-273 are cytoplasmic; sequence TYTCGQFHLLHQRIAGLFAGSNAELAESIQLERLKRIVEKHNNIISFAKRLEDFFNP. Residues 274-294 form a helical membrane-spanning segment; that stretch reads ILLANLMISSVLICMVGFQIV. Topologically, residues 295–299 are extracellular; sequence TGKNM. The helical transmembrane segment at 300–320 threads the bilayer; it reads FIGDYVKFIIYISSALSQLYV. At 321–385 the chain is on the cytoplasmic side; sequence LCENGDALIK…PVRITAFKFS (65 aa). Residues 386-406 traverse the membrane as a helical segment; that stretch reads TLSLQSFTAILSTSISYFTLL. Over 407 to 418 the chain is Extracellular; that stretch reads RSVYFDDEKKLD.

It belongs to the insect chemoreceptor superfamily. Heteromeric odorant receptor channel (TC 1.A.69) family. Or1a subfamily. As to quaternary structure, interacts with Orco. Complexes exist early in the endomembrane system in olfactory sensory neurons (OSNs), coupling these complexes to the conserved ciliary trafficking pathway. In terms of tissue distribution, expressed in olfactory sensory neurons in the antenna.

The protein resides in the cell membrane. Functionally, odorant receptor which mediates acceptance or avoidance behavior, depending on its substrates. The odorant receptor repertoire encodes a large collection of odor stimuli that vary widely in identity, intensity, and duration. May form a complex with Orco to form odorant-sensing units, providing sensitive and prolonged odorant signaling and calcium permeability. Involved in the behavioral responses to octanol, nonanol, and pentyl acetate. This Drosophila melanogaster (Fruit fly) protein is Odorant receptor 13a (Or13a).